Consider the following 385-residue polypeptide: Leucine aminopeptidase 1 (385 aa).

The N-terminal stretch at 1–14 is a signal peptide; sequence MKFLTLALSATATA. The propeptide occupies 15–85; it reads MIIVNPEQQP…YGTLHTTRVV (71 aa). The Zn(2+) site is built by histidine 185, aspartate 204, glutamate 243, and aspartate 270. Cysteine 319 and cysteine 323 form a disulfide bridge. Histidine 352 contacts Zn(2+).

Belongs to the peptidase M28 family. M28E subfamily. Monomer. Zn(2+) serves as cofactor.

The protein localises to the secreted. Functionally, extracellular aminopeptidase that allows assimilation of proteinaceous substrates. In Penicillium rubens (strain ATCC 28089 / DSM 1075 / NRRL 1951 / Wisconsin 54-1255) (Penicillium chrysogenum), this protein is Leucine aminopeptidase 1 (lap1).